The sequence spans 333 residues: Quinolinate synthase (333 aa).

The iminosuccinate site is built by H41 and S58. [4Fe-4S] cluster is bound at residue C103. Iminosuccinate is bound by residues 129-131 (YIN) and S146. C189 is a binding site for [4Fe-4S] cluster. Iminosuccinate-binding positions include 215 to 217 (HPE) and T232. C282 serves as a coordination point for [4Fe-4S] cluster.

Belongs to the quinolinate synthase family. Type 2 subfamily. Requires [4Fe-4S] cluster as cofactor.

It is found in the cytoplasm. The catalysed reaction is iminosuccinate + dihydroxyacetone phosphate = quinolinate + phosphate + 2 H2O + H(+). It functions in the pathway cofactor biosynthesis; NAD(+) biosynthesis; quinolinate from iminoaspartate: step 1/1. Its function is as follows. Catalyzes the condensation of iminoaspartate with dihydroxyacetone phosphate to form quinolinate. The protein is Quinolinate synthase of Prochlorococcus marinus (strain MIT 9313).